The chain runs to 1441 residues: Tripeptidyl-peptidase 2 (1441 aa).

The disordered stretch occupies residues 62 to 89 (AESSERSNSSKKTTNKEQSDKSAESRMA). The segment covering 75–85 (TNKEQSDKSAE) has biased composition (basic and acidic residues). The 502-residue stretch at 107–608 (ETGVLNFLQK…HGLLNVEKAF (502 aa)) folds into the Peptidase S8 domain. Active-site charge relay system residues include D131, H359, and S549. The span at 1139-1155 (TANGAKPKAPATPQAAT) shows a compositional bias: low complexity. 2 disordered regions span residues 1139-1190 (TANG…KANA) and 1255-1274 (QKTSPPEAGESADKQKEDQK). S1182 is modified (phosphoserine). A compositionally biased stretch (basic and acidic residues) spans 1265–1274 (SADKQKEDQK).

This sequence belongs to the peptidase S8 family. In terms of assembly, homooligomer; forms a complex of 6 MDa probably composed of 40 subunits. Forms a structure consisting of 2 segmented and twisted strands that form a spindle-shaped structure. Each strand is composed of 10 segments (a segment being a homodimer oriented head to head), stacking of these segments leads to the formation of a twisted single strand. 2 strands compose the fully assembled spindle.

It is found in the cytoplasm. The enzyme catalyses Release of an N-terminal tripeptide from a polypeptide.. Inhibited by phenylmethanesulfonyl fluoride (PMSF) and butabindide, but not by peptidase inhibitor pepstatin, EDTA, nor bestatin. In terms of biological role, component of the proteolytic cascade acting downstream of the 26S proteasome in the ubiquitin-proteasome pathway. Efficiently cleaves Ala-Ala-Ala-polypeptide and Pro-Pro-Ala-polypeptide, Val-Leu-Lys-polypeptide only at high concentration. Does not cleave Ala-Phe-Pro-polypeptide nor Pro-Leu-Gly-polypeptide. This Drosophila melanogaster (Fruit fly) protein is Tripeptidyl-peptidase 2 (TppII).